The primary structure comprises 246 residues: MKYDIIGDIHGCFQEFQNLTEKLGYNWSSGLPVHPDQRKLAFVGDITDRGPHSLRMIEIVWELVIHKKEAYYAPGNHCNKLYRFFLGRNVTVAHGLETTVAEYEALPSHKQNIIKEKFITLYEQSPLYHILDEKRVIVCHAGIRQDYIGRRDKKVQTFVLYGDITGEKHADGSPVRRDWAQEYKGQAWIVYGHTPVAEPRFINQTVNIDTGAVFGGKLTGLRYPEMETISVPSSLPFVAEKFRPIS.

This sequence belongs to the PrpE family. Ni(2+) serves as cofactor.

It catalyses the reaction P(1),P(4)-bis(5'-guanosyl) tetraphosphate + H2O = GMP + GTP + 2 H(+). Functionally, asymmetrically hydrolyzes Ap4p to yield AMP and ATP. This Bacillus cereus (strain B4264) protein is Bis(5'-nucleosyl)-tetraphosphatase PrpE [asymmetrical].